A 214-amino-acid chain; its full sequence is Charged multivesicular body protein 2b-B (214 aa).

The stretch at 25 to 55 (QRAITRDRAALEKQEKQLEMEIKKMAKTGNK) forms a coiled coil. The disordered stretch occupies residues 178-200 (MAKAPSAAKGLPSTSAAKSKGIS). The MIT-interacting motif motif lies at 202-212 (EEIERQLKALG).

Belongs to the SNF7 family. In terms of assembly, probable core component of the endosomal sorting required for transport complex III (ESCRT-III). ESCRT-III components are thought to multimerize to form a flat lattice on the perimeter membrane of the endosome.

The protein localises to the cytoplasm. The protein resides in the cytosol. It is found in the late endosome membrane. Probable core component of the endosomal sorting required for transport complex III (ESCRT-III) which is involved in multivesicular bodies (MVBs) formation and sorting of endosomal cargo proteins into MVBs. MVBs contain intraluminal vesicles (ILVs) that are generated by invagination and scission from the limiting membrane of the endosome and mostly are delivered to lysosomes enabling degradation of membrane proteins, such as stimulated growth factor receptors, lysosomal enzymes and lipids. The protein is Charged multivesicular body protein 2b-B (chmp2b-b) of Xenopus laevis (African clawed frog).